The primary structure comprises 652 residues: Probable protein phosphatase 2C 19 (652 aa).

The 253-residue stretch at 265 to 517 (KYVVSSMQGW…DNTTVILVLF (253 aa)) folds into the PPM-type phosphatase domain. 4 residues coordinate Mn(2+): D300, G301, E467, and D508. The disordered stretch occupies residues 524–567 (AVPPVDTDTDTDSHTGDDVDNNDPANEVDPTANAGSDDSNTSDE).

Belongs to the PP2C family. Mg(2+) serves as cofactor. The cofactor is Mn(2+).

It carries out the reaction O-phospho-L-seryl-[protein] + H2O = L-seryl-[protein] + phosphate. The catalysed reaction is O-phospho-L-threonyl-[protein] + H2O = L-threonyl-[protein] + phosphate. The sequence is that of Probable protein phosphatase 2C 19 from Oryza sativa subsp. japonica (Rice).